Reading from the N-terminus, the 353-residue chain is DNA polymerase IV (353 aa).

The UmuC domain occupies 4–185 (IIHVDMDCFF…LPLSKIPGVG (182 aa)). The Mg(2+) site is built by Asp8 and Asp103. The active site involves Glu104.

The protein belongs to the DNA polymerase type-Y family. Monomer. It depends on Mg(2+) as a cofactor.

The protein resides in the cytoplasm. It catalyses the reaction DNA(n) + a 2'-deoxyribonucleoside 5'-triphosphate = DNA(n+1) + diphosphate. In terms of biological role, poorly processive, error-prone DNA polymerase involved in untargeted mutagenesis. Copies undamaged DNA at stalled replication forks, which arise in vivo from mismatched or misaligned primer ends. These misaligned primers can be extended by PolIV. Exhibits no 3'-5' exonuclease (proofreading) activity. May be involved in translesional synthesis, in conjunction with the beta clamp from PolIII. In Serratia proteamaculans (strain 568), this protein is DNA polymerase IV.